We begin with the raw amino-acid sequence, 154 residues long: Small ribosomal subunit protein uS15 (154 aa).

A compositionally biased stretch (basic residues) spans 1–10 (MARMHSRRRG). Residues 1–32 (MARMHSRRRGSSGSDRPTADEPPEWSEVDEDA) form a disordered region. Residues 21–32 (EPPEWSEVDEDA) show a composition bias toward acidic residues.

The protein belongs to the universal ribosomal protein uS15 family. As to quaternary structure, part of the 30S ribosomal subunit.

The polypeptide is Small ribosomal subunit protein uS15 (Natronomonas pharaonis (strain ATCC 35678 / DSM 2160 / CIP 103997 / JCM 8858 / NBRC 14720 / NCIMB 2260 / Gabara) (Halobacterium pharaonis)).